We begin with the raw amino-acid sequence, 136 residues long: Nucleoside diphosphate kinase (136 aa).

ATP-binding residues include Lys-10, Phe-58, Arg-86, Thr-92, Arg-104, and Asn-114. His-117 serves as the catalytic Pros-phosphohistidine intermediate.

It belongs to the NDK family. As to quaternary structure, homotetramer. It depends on Mg(2+) as a cofactor.

The protein localises to the cytoplasm. The enzyme catalyses a 2'-deoxyribonucleoside 5'-diphosphate + ATP = a 2'-deoxyribonucleoside 5'-triphosphate + ADP. It carries out the reaction a ribonucleoside 5'-diphosphate + ATP = a ribonucleoside 5'-triphosphate + ADP. Functionally, major role in the synthesis of nucleoside triphosphates other than ATP. The ATP gamma phosphate is transferred to the NDP beta phosphate via a ping-pong mechanism, using a phosphorylated active-site intermediate. The protein is Nucleoside diphosphate kinase of Corynebacterium efficiens (strain DSM 44549 / YS-314 / AJ 12310 / JCM 11189 / NBRC 100395).